The chain runs to 581 residues: Threonine--tRNA ligase (581 aa).

Residues 185-478 (DHRKLGKELD…LVEHYGGAFP (294 aa)) form a catalytic region. Zn(2+)-binding residues include cysteine 278, histidine 329, and histidine 455.

It belongs to the class-II aminoacyl-tRNA synthetase family. As to quaternary structure, homodimer. Zn(2+) is required as a cofactor.

It localises to the cytoplasm. It catalyses the reaction tRNA(Thr) + L-threonine + ATP = L-threonyl-tRNA(Thr) + AMP + diphosphate + H(+). Functionally, catalyzes the attachment of threonine to tRNA(Thr) in a two-step reaction: L-threonine is first activated by ATP to form Thr-AMP and then transferred to the acceptor end of tRNA(Thr). Also edits incorrectly charged L-seryl-tRNA(Thr). The polypeptide is Threonine--tRNA ligase (Borreliella burgdorferi (strain ATCC 35210 / DSM 4680 / CIP 102532 / B31) (Borrelia burgdorferi)).